Here is a 308-residue protein sequence, read N- to C-terminus: Eukaryotic translation initiation factor 3 subunit G-A (308 aa).

Disordered regions lie at residues 1-35 and 177-226; these read MPTG…KPDP and TGDK…ADDN. Residues 185 to 194 show a composition bias toward low complexity; the sequence is GAEPEPAQAP. Over residues 209 to 226 the composition is skewed to basic and acidic residues; that stretch reads GGSRRGESMQPNRRADDN. The 79-residue stretch at 227–305 folds into the RRM domain; the sequence is ATIRVTNLSE…LILNVEWAKP (79 aa).

The protein belongs to the eIF-3 subunit G family. As to quaternary structure, component of the eukaryotic translation initiation factor 3 (eIF-3) complex, which is composed of 13 subunits: eif3a, eif3b, eif3c, eif3d, eif3e, eif3f, eif3g, eif3h, eif3i, eif3j, eif3k, eif3l and eif3m.

It is found in the cytoplasm. In terms of biological role, RNA-binding component of the eukaryotic translation initiation factor 3 (eIF-3) complex, which is involved in protein synthesis of a specialized repertoire of mRNAs and, together with other initiation factors, stimulates binding of mRNA and methionyl-tRNAi to the 40S ribosome. The eIF-3 complex specifically targets and initiates translation of a subset of mRNAs involved in cell proliferation. This subunit can bind 18S rRNA. The protein is Eukaryotic translation initiation factor 3 subunit G-A (eif3g-a) of Xenopus laevis (African clawed frog).